A 116-amino-acid chain; its full sequence is Small ribosomal subunit protein eS24 (116 aa).

The interval Ile-81 to Glu-116 is disordered. The segment covering Glu-96 to Glu-116 has biased composition (acidic residues).

Belongs to the eukaryotic ribosomal protein eS24 family.

In Methanopyrus kandleri (strain AV19 / DSM 6324 / JCM 9639 / NBRC 100938), this protein is Small ribosomal subunit protein eS24.